A 170-amino-acid chain; its full sequence is Adenine phosphoribosyltransferase (170 aa).

It belongs to the purine/pyrimidine phosphoribosyltransferase family. As to quaternary structure, homodimer.

It is found in the cytoplasm. It catalyses the reaction AMP + diphosphate = 5-phospho-alpha-D-ribose 1-diphosphate + adenine. It participates in purine metabolism; AMP biosynthesis via salvage pathway; AMP from adenine: step 1/1. Catalyzes a salvage reaction resulting in the formation of AMP, that is energically less costly than de novo synthesis. The sequence is that of Adenine phosphoribosyltransferase from Streptococcus pneumoniae (strain Hungary19A-6).